Consider the following 429-residue polypeptide: Uterine milk protein (429 aa).

An N-terminal signal peptide occupies residues 1-25; it reads MSHRRMQLALSLVFILCGLFNSIFC. N-linked (GlcNAc...) asparagine glycans are attached at residues Asn-222 and Asn-268.

This sequence belongs to the serpin family. UTMP subfamily. Post-translationally, glycosylated; carries the so-called mannose 6-phosphate lysosomal recognition marker on its carbohydrate chains. As to expression, secreted by ovine endometrium under the influence of progesterone.

This is Uterine milk protein from Ovis aries (Sheep).